A 364-amino-acid chain; its full sequence is tRNA-specific 2-thiouridylase MnmA 1 (364 aa).

ATP contacts are provided by residues 10-17 (GMSGGVDS) and methionine 36. Cysteine 106 acts as the Nucleophile in catalysis. The cysteines at positions 106 and 204 are disulfide-linked. Position 130 (glycine 130) interacts with ATP. The interval 154 to 156 (KDQ) is interaction with tRNA. Cysteine 204 functions as the Cysteine persulfide intermediate in the catalytic mechanism. The tract at residues 310–311 (RY) is interaction with tRNA.

This sequence belongs to the MnmA/TRMU family.

The protein resides in the cytoplasm. It catalyses the reaction S-sulfanyl-L-cysteinyl-[protein] + uridine(34) in tRNA + AH2 + ATP = 2-thiouridine(34) in tRNA + L-cysteinyl-[protein] + A + AMP + diphosphate + H(+). Functionally, catalyzes the 2-thiolation of uridine at the wobble position (U34) of tRNA, leading to the formation of s(2)U34. The protein is tRNA-specific 2-thiouridylase MnmA 1 of Thermoanaerobacter sp. (strain X514).